The following is a 418-amino-acid chain: Tyrosine--tRNA ligase 1 (418 aa).

Tyr34 is a binding site for L-tyrosine. The short motif at 39-48 (PTADSLHIGH) is the 'HIGH' region element. L-tyrosine is bound by residues Tyr169 and Gln173. The 'KMSKS' region motif lies at 230 to 234 (KFGKT). An ATP-binding site is contributed by Lys233. One can recognise an S4 RNA-binding domain in the interval 352 to 418 (TVLIDLLVES…GKKKYFLIRY (67 aa)).

Belongs to the class-I aminoacyl-tRNA synthetase family. TyrS type 1 subfamily. Homodimer.

The protein resides in the cytoplasm. The catalysed reaction is tRNA(Tyr) + L-tyrosine + ATP = L-tyrosyl-tRNA(Tyr) + AMP + diphosphate + H(+). Functionally, catalyzes the attachment of tyrosine to tRNA(Tyr) in a two-step reaction: tyrosine is first activated by ATP to form Tyr-AMP and then transferred to the acceptor end of tRNA(Tyr). This Bacillus cereus (strain ATCC 14579 / DSM 31 / CCUG 7414 / JCM 2152 / NBRC 15305 / NCIMB 9373 / NCTC 2599 / NRRL B-3711) protein is Tyrosine--tRNA ligase 1.